The chain runs to 645 residues: Translation factor GUF1, mitochondrial (645 aa).

The tr-type G domain maps to 44–228; the sequence is ENYRNFSIVA…AIIDRIPPPT (185 aa). GTP contacts are provided by residues 53–60, 120–124, and 174–177; these read AHVDHGKS, DTPGH, and NKID.

The protein belongs to the TRAFAC class translation factor GTPase superfamily. Classic translation factor GTPase family. LepA subfamily.

Its subcellular location is the mitochondrion inner membrane. It carries out the reaction GTP + H2O = GDP + phosphate + H(+). In terms of biological role, promotes mitochondrial protein synthesis. May act as a fidelity factor of the translation reaction, by catalyzing a one-codon backward translocation of tRNAs on improperly translocated ribosomes. Binds to mitochondrial ribosomes in a GTP-dependent manner. This chain is Translation factor GUF1, mitochondrial, found in Saccharomyces cerevisiae (strain ATCC 204508 / S288c) (Baker's yeast).